Reading from the N-terminus, the 379-residue chain is Putative glutamate--cysteine ligase 2 (379 aa).

The protein belongs to the glutamate--cysteine ligase type 2 family. YbdK subfamily.

It catalyses the reaction L-cysteine + L-glutamate + ATP = gamma-L-glutamyl-L-cysteine + ADP + phosphate + H(+). ATP-dependent carboxylate-amine ligase which exhibits weak glutamate--cysteine ligase activity. The protein is Putative glutamate--cysteine ligase 2 of Roseiflexus sp. (strain RS-1).